Here is a 382-residue protein sequence, read N- to C-terminus: RNA exonuclease 3 (382 aa).

Residues 223 to 369 (VLALDCEMAY…EDAIAAMDVV (147 aa)) form the Exonuclease domain.

This sequence belongs to the REXO1/REXO3 family.

It localises to the cytoplasm. Its subcellular location is the nucleus. In terms of biological role, 3' to 5' exoribonuclease required for proper 3' end maturation of MRP RNA and of the U5L snRNA. The sequence is that of RNA exonuclease 3 (REX3) from Eremothecium gossypii (strain ATCC 10895 / CBS 109.51 / FGSC 9923 / NRRL Y-1056) (Yeast).